The sequence spans 605 residues: Probable potassium transport system protein Kup 3 (605 aa).

The next 12 membrane-spanning stretches (helical) occupy residues 16–36 (ALGL…TVIF), 49–69 (ILSL…AWLA), 97–117 (VAFA…DAVI), 138–158 (GLST…LFSV), 170–190 (FGPI…VSAF), 212–232 (GLAG…GEAL), 247–267 (AWHF…VFAI), 287–307 (LYIP…QAII), 339–359 (IYLG…MLVF), 368–388 (AYGM…IIVF), 397–417 (ALVA…TFSK), and 418–438 (LPHG…TIII).

It belongs to the HAK/KUP transporter (TC 2.A.72) family.

Its subcellular location is the cell inner membrane. The catalysed reaction is K(+)(in) + H(+)(in) = K(+)(out) + H(+)(out). Transport of potassium into the cell. Likely operates as a K(+):H(+) symporter. The chain is Probable potassium transport system protein Kup 3 from Geobacter sulfurreducens (strain ATCC 51573 / DSM 12127 / PCA).